Consider the following 210-residue polypeptide: FMN-dependent NADH:quinone oxidoreductase 8 (210 aa).

FMN contacts are provided by residues Ser10 and 16–18 (SIS).

This sequence belongs to the azoreductase type 1 family. Homodimer. FMN is required as a cofactor.

It carries out the reaction 2 a quinone + NADH + H(+) = 2 a 1,4-benzosemiquinone + NAD(+). The catalysed reaction is N,N-dimethyl-1,4-phenylenediamine + anthranilate + 2 NAD(+) = 2-(4-dimethylaminophenyl)diazenylbenzoate + 2 NADH + 2 H(+). Its function is as follows. Quinone reductase that provides resistance to thiol-specific stress caused by electrophilic quinones. In terms of biological role, also exhibits azoreductase activity. Catalyzes the reductive cleavage of the azo bond in aromatic azo compounds to the corresponding amines. The polypeptide is FMN-dependent NADH:quinone oxidoreductase 8 (Burkholderia lata (strain ATCC 17760 / DSM 23089 / LMG 22485 / NCIMB 9086 / R18194 / 383)).